We begin with the raw amino-acid sequence, 157 residues long: Transcription factor HES-2 (157 aa).

In terms of domain architecture, bHLH spans 13–70; that stretch reads LRKNLKPLLEKRRRARINESLSQLKGLVLPLLGAETSRSSKLEKADILEMTVRFLQEQ. The region spanning 86–119 is the Orange domain; that stretch reads YLEGYRACLARLARVLPACSVLEPAVSARLLEHL. Positions 124–157 are disordered; sequence VSDDSPSLTLPPAPAPAPSPPVPPPGSSGLWRPW. The segment covering 132 to 149 has biased composition (pro residues); the sequence is TLPPAPAPAPSPPVPPPG. Positions 154 to 157 match the WRPW motif motif; the sequence is WRPW.

In terms of assembly, transcription repression requires formation of a complex with a corepressor protein of the Groucho/TLE family.

The protein resides in the nucleus. In terms of biological role, transcriptional repressor of genes that require a bHLH protein for their transcription. The polypeptide is Transcription factor HES-2 (Hes2) (Mus musculus (Mouse)).